The chain runs to 159 residues: Deoxyuridine 5'-triphosphate nucleotidohydrolase (159 aa).

DUMP is bound by residues Ser-79, Gly-92, Asp-95, Tyr-98, Lys-103, Arg-148, Phe-153, and Gly-154.

The protein belongs to the dUTPase family. In terms of assembly, homotrimer. Mg(2+) is required as a cofactor.

It carries out the reaction dUTP + H2O = dUMP + diphosphate + H(+). Its pathway is pyrimidine metabolism; dUMP biosynthesis; dUMP from dCTP (dUTP route): step 2/2. Its function is as follows. Involved in nucleotide metabolism via production of dUMP, the immediate precursor of thymidine nucleotides, and decreases the intracellular concentration of dUTP so that uracil cannot be incorporated into DNA. This is Deoxyuridine 5'-triphosphate nucleotidohydrolase (DUT1) from Candida albicans (strain SC5314 / ATCC MYA-2876) (Yeast).